The sequence spans 192 residues: Transmembrane protein 276 (192 aa).

An N-terminal signal peptide occupies residues 1–32; it reads MVSKPRNEWSTALSHLVLAGVSLHAAVSSVQS. The next 4 membrane-spanning stretches (helical) occupy residues 35 to 55, 63 to 83, 92 to 112, and 114 to 134; these read GAAA…APEL, AGAW…FHWV, LLLG…PEGC, and VAGQ…AVFT.

Its subcellular location is the membrane. The protein is Transmembrane protein 276 of Rattus norvegicus (Rat).